A 374-amino-acid chain; its full sequence is Chorismate synthase (374 aa).

Position 55 (arginine 55) interacts with NADP(+). FMN-binding positions include 132–134 (RGS), glycine 293, 308–312 (KPTPS), and arginine 335.

Belongs to the chorismate synthase family. FMNH2 is required as a cofactor.

The enzyme catalyses 5-O-(1-carboxyvinyl)-3-phosphoshikimate = chorismate + phosphate. Its pathway is metabolic intermediate biosynthesis; chorismate biosynthesis; chorismate from D-erythrose 4-phosphate and phosphoenolpyruvate: step 7/7. In terms of biological role, catalyzes the anti-1,4-elimination of the C-3 phosphate and the C-6 proR hydrogen from 5-enolpyruvylshikimate-3-phosphate (EPSP) to yield chorismate, which is the branch point compound that serves as the starting substrate for the three terminal pathways of aromatic amino acid biosynthesis. This reaction introduces a second double bond into the aromatic ring system. This chain is Chorismate synthase, found in Methanothermobacter thermautotrophicus (strain ATCC 29096 / DSM 1053 / JCM 10044 / NBRC 100330 / Delta H) (Methanobacterium thermoautotrophicum).